Consider the following 267-residue polypeptide: L-aspartate dehydrogenase (267 aa).

NAD(+) contacts are provided by Ala-124 and Asn-190. The active site involves His-220.

It belongs to the L-aspartate dehydrogenase family.

The enzyme catalyses L-aspartate + NADP(+) + H2O = oxaloacetate + NH4(+) + NADPH + H(+). It catalyses the reaction L-aspartate + NAD(+) + H2O = oxaloacetate + NH4(+) + NADH + H(+). It functions in the pathway cofactor biosynthesis; NAD(+) biosynthesis; iminoaspartate from L-aspartate (dehydrogenase route): step 1/1. Its function is as follows. Specifically catalyzes the NAD or NADP-dependent dehydrogenation of L-aspartate to iminoaspartate. The sequence is that of L-aspartate dehydrogenase from Pseudomonas aeruginosa (strain ATCC 15692 / DSM 22644 / CIP 104116 / JCM 14847 / LMG 12228 / 1C / PRS 101 / PAO1).